The primary structure comprises 163 residues: MFIPKANRVAIYEYLFKEGVLVAKKDSPIQKHSELDKIPNLQVIKVMQSLNSRGWVKEQFAWRHFYWLLTNEGIEELRRYLHLPPEIVPSTLTQTTRSNAVRPRGGPGGPGGGFGGASKTDDDRSNYRRGPGAYGMDKKGDVGAGTGRVEYRGGFGRASRYDN.

The segment at 92 to 163 is disordered; it reads LTQTTRSNAV…GFGRASRYDN (72 aa). A compositionally biased stretch (gly residues) spans 105 to 116; sequence GGPGGPGGGFGG.

The protein belongs to the eukaryotic ribosomal protein eS10 family.

The protein resides in the cytoplasm. This Drosophila melanogaster (Fruit fly) protein is Small ribosomal subunit protein eS10A (RpS10a).